A 356-amino-acid polypeptide reads, in one-letter code: Probable neutral protease 2 homolog TRV_06370 (356 aa).

The signal sequence occupies residues 1–17; the sequence is MQFTALLAALGAPLALA. Positions 18 to 183 are excised as a propeptide; it reads ASIPAAAHNH…DDSTGVIDKR (166 aa). 2 disulfides stabilise this stretch: Cys191–Cys262 and Cys269–Cys287. His311 serves as a coordination point for Zn(2+). Residue Glu312 is part of the active site. Residues His315 and Asp326 each coordinate Zn(2+).

It belongs to the peptidase M35 family. The cofactor is Zn(2+).

It is found in the secreted. It catalyses the reaction Preferential cleavage of bonds with hydrophobic residues in P1'. Also 3-Asn-|-Gln-4 and 8-Gly-|-Ser-9 bonds in insulin B chain.. Probable secreted metalloprotease that shows high activities on basic nuclear substrates such as histone and protamine. May be involved in virulence. This Trichophyton verrucosum (strain HKI 0517) protein is Probable neutral protease 2 homolog TRV_06370.